We begin with the raw amino-acid sequence, 39 residues long: Cytochrome b559 subunit beta (39 aa).

The chain crosses the membrane as a helical span at residues Trp-14–Ser-30. His-18 provides a ligand contact to heme.

It belongs to the PsbE/PsbF family. In terms of assembly, heterodimer of an alpha subunit and a beta subunit. PSII is composed of 1 copy each of membrane proteins PsbA, PsbB, PsbC, PsbD, PsbE, PsbF, PsbH, PsbI, PsbJ, PsbK, PsbL, PsbM, PsbT, PsbX, PsbY, PsbZ, Psb30/Ycf12, at least 3 peripheral proteins of the oxygen-evolving complex and a large number of cofactors. It forms dimeric complexes. It depends on heme b as a cofactor.

The protein resides in the plastid. Its subcellular location is the chloroplast thylakoid membrane. Functionally, this b-type cytochrome is tightly associated with the reaction center of photosystem II (PSII). PSII is a light-driven water:plastoquinone oxidoreductase that uses light energy to abstract electrons from H(2)O, generating O(2) and a proton gradient subsequently used for ATP formation. It consists of a core antenna complex that captures photons, and an electron transfer chain that converts photonic excitation into a charge separation. This is Cytochrome b559 subunit beta from Allium textile (Textile onion).